A 202-amino-acid polypeptide reads, in one-letter code: MLPALETTLPLLLFWGGIGYLLGSVPFGMVITRAFGLGNLREIGSGNIGTTNVLRTGSKAAAAATLLLDGGKGAAAVLLARALAGEDAAQLAGLLAFLGHCFPVWLGFKGGKGVATFLGLMLALAWPVGIACCLTWLGVAVLRRISSLAALCAAVAAPVWCLLLGAPQAAVLSALLALVILWRHRENIARLRAGTEPKIGQK.

A run of 5 helical transmembrane segments spans residues 11–31, 60–80, 88–108, 117–137, and 162–182; these read LLLFWGGIGYLLGSVPFGMVI, AAAAATLLLDGGKGAAAVLLA, AAQLAGLLAFLGHCFPVWLGF, FLGLMLALAWPVGIACCLTWL, and LLLGAPQAAVLSALLALVILW.

The protein belongs to the PlsY family. In terms of assembly, probably interacts with PlsX.

The protein localises to the cell inner membrane. It catalyses the reaction an acyl phosphate + sn-glycerol 3-phosphate = a 1-acyl-sn-glycero-3-phosphate + phosphate. It functions in the pathway lipid metabolism; phospholipid metabolism. Catalyzes the transfer of an acyl group from acyl-phosphate (acyl-PO(4)) to glycerol-3-phosphate (G3P) to form lysophosphatidic acid (LPA). This enzyme utilizes acyl-phosphate as fatty acyl donor, but not acyl-CoA or acyl-ACP. This is Glycerol-3-phosphate acyltransferase from Ruegeria sp. (strain TM1040) (Silicibacter sp.).